We begin with the raw amino-acid sequence, 600 residues long: Na(+)/dicarboxylate cotransporter 3 (600 aa).

The Cytoplasmic portion of the chain corresponds to 1-16; the sequence is MAALAALAKKVWSARR. The chain crosses the membrane as a helical span at residues 17 to 37; sequence LLVLLLVPLALLPILFALPPK. Topologically, residues 38–55 are extracellular; the sequence is EGRCLYVILLMAVYWCTE. The chain crosses the membrane as a helical span at residues 56 to 76; it reads ALPLSVTALLPIILFPFMGIL. Topologically, residues 77–82 are cytoplasmic; it reads PSSKVC. A helical membrane pass occupies residues 83-103; sequence PQYFLDTNFLFLSGLIMASAI. Over 104–137 the chain is Extracellular; sequence EEWNLHRRIALKVLMLVGVQPARLILGMMVTTSF. A helical transmembrane segment spans residues 138 to 158; that stretch reads LSMWLSNTASTAMMLPIASAI. Residues 159–229 lie on the Cytoplasmic side of the membrane; it reads LKSLFGQREA…KEEEHRRNIW (71 aa). A helical membrane pass occupies residues 230 to 250; the sequence is KGFLISIPYSASIGGTATLTG. Over 251-278 the chain is Extracellular; the sequence is TAPNLILLGQLKSFFPQCDVVNFGSWFI. A helical transmembrane segment spans residues 279–299; the sequence is FAFPLMLLFLLVGWLWISFLY. Topologically, residues 300 to 336 are cytoplasmic; it reads GGMSWRSWRKKKSKIRADAEDQAKAVIQEEFQNLGPI. The helical transmembrane segment at 337 to 357 threads the bilayer; sequence KFAEQAVFILFCTFAILLFSR. Over 358–372 the chain is Extracellular; that stretch reads DPKFIPGWASLFAPG. Residues 373–393 traverse the membrane as a helical segment; sequence FVSDAVTGVAIVTILFFFPSQ. Residues 394-422 are Cytoplasmic-facing; the sequence is KPSLKWWFDFKAPNSETEPLLSWKKAQET. An intramembrane region (helical) is located at residues 423–443; the sequence is VPWNIILLLGGGFAMAKGCEE. Topologically, residues 444–461 are cytoplasmic; it reads SGLSAWIGGQLHPLEHVP. A helical membrane pass occupies residues 462 to 482; it reads PLLAVLLITVVIAFFTEFASN. At 483–505 the chain is on the extracellular side; sequence TATIIIFLPVLAELAIRLHVHPL. The chain crosses the membrane as a helical span at residues 506–526; it reads YLMIPGTVGCSYAFMLPVSTP. Topologically, residues 527 to 546 are cytoplasmic; sequence PNSIAFSTGHLLVKDMVRTG. The helical transmembrane segment at 547 to 567 threads the bilayer; sequence LLMNLMGVLLLSLAMNTWAQT. The Extracellular segment spans residues 568–600; that stretch reads IFQLGTFPDWANTHAANATALPPALTNNTVQTF. N-linked (GlcNAc...) asparagine glycosylation is found at asparagine 584 and asparagine 594.

It belongs to the SLC13A/DASS transporter (TC 2.A.47) family. NADC subfamily. Highly expressed in kidney, and at much lower levels in brain.

The protein resides in the cell membrane. The catalysed reaction is succinate(out) + 3 Na(+)(out) = succinate(in) + 3 Na(+)(in). The enzyme catalyses 2-oxoglutarate(out) + 3 Na(+)(out) = 2-oxoglutarate(in) + 3 Na(+)(in). It carries out the reaction N-acetyl-L-aspartate(out) + 3 Na(+)(out) = N-acetyl-L-aspartate(in) + 3 Na(+)(in). It catalyses the reaction fumarate(out) + 3 Na(+)(out) = fumarate(in) + 3 Na(+)(in). The catalysed reaction is glutarate(out) + 3 Na(+)(out) = glutarate(in) + 3 Na(+)(in). The enzyme catalyses 2,2-dimethylsuccinate(out) + 3 Na(+)(out) = 2,2-dimethylsuccinate(in) + 3 Na(+)(in). It carries out the reaction 2,3-dimethylsuccinate(out) + 3 Na(+)(out) = 2,3-dimethylsuccinate(in) + 3 Na(+)(in). It catalyses the reaction malate(out) + 3 Na(+)(out) = malate(in) + 3 Na(+)(in). The catalysed reaction is itaconate(out) + 3 Na(+)(out) = itaconate(in) + 3 Na(+)(in). Functionally, high-affinity sodium-dicarboxylate cotransporter that accepts a range of substrates with 4-6 carbon atoms, such as the citric acid cycle intermediates succinate and alpha-ketoglutarate (2-oxoglutarate), as well as other compounds including N-acetyl-L-aspartate. Transports the dicarboxylate into the cell with a probable stoichiometry of 3 Na(+) for 1 divalent dicarboxylate, rendering the process electrogenic. Can transport citrate in a Na(+)-dependent manner, recognizing the divalent form of citrate rather than the trivalent form which is normally found in blood. Imports itaconate in hepatocytes leading to activation of TFEB-dependent lysosomal biogenesis involved in antibacterial innate immune response. This chain is Na(+)/dicarboxylate cotransporter 3 (Slc13a3), found in Mus musculus (Mouse).